Here is a 32-residue protein sequence, read N- to C-terminus: Seminal plasma protein PDC-109 (32 aa).

Positions 1-32 (DQDEGVSTEPTQVGPAELHNDETCVGPLVYRN) are disordered. A glycan (O-linked (GalNAc...) threonine) is linked at threonine 11. The Fibronectin type-II domain occupies 19 to 32 (HNDETCVGPLVYRN).

It belongs to the seminal plasma protein family. In terms of assembly, homodimer.

The protein resides in the secreted. Its function is as follows. Could enhance the fertilizing capacity of bull spermatozoa upon interaction with heparin-like glycosaminoglycans present in the female genital tract. Exhibits both simulatory and inhibitory actions on the release of pituitary gonadotropins. Binds to heparin and gelatin. The sequence is that of Seminal plasma protein PDC-109 from Bos indicus (Zebu).